The sequence spans 434 residues: Trigger factor (434 aa).

The PPIase FKBP-type domain occupies 161–246; sequence EDRATLDFTG…LKKVEVRELP (86 aa).

The protein belongs to the FKBP-type PPIase family. Tig subfamily.

The protein resides in the cytoplasm. The enzyme catalyses [protein]-peptidylproline (omega=180) = [protein]-peptidylproline (omega=0). Functionally, involved in protein export. Acts as a chaperone by maintaining the newly synthesized protein in an open conformation. Functions as a peptidyl-prolyl cis-trans isomerase. The polypeptide is Trigger factor (Yersinia pseudotuberculosis serotype O:1b (strain IP 31758)).